Here is a 54-residue protein sequence, read N- to C-terminus: UPF0391 membrane protein Aave_3864 (54 aa).

2 consecutive transmembrane segments (helical) span residues 5–25 (AVVF…GIAA) and 28–48 (VGIA…TFVL).

Belongs to the UPF0391 family.

The protein resides in the cell membrane. This is UPF0391 membrane protein Aave_3864 from Paracidovorax citrulli (strain AAC00-1) (Acidovorax citrulli).